The chain runs to 101 residues: Small ribosomal subunit protein uS14 (101 aa).

Positions 1-26 (MAKVSSIKKNESRKKKSQSLHNKRSA) are disordered. Positions 11–26 (ESRKKKSQSLHNKRSA) are enriched in basic residues.

It belongs to the universal ribosomal protein uS14 family. In terms of assembly, part of the 30S ribosomal subunit. Contacts proteins S3 and S10.

Binds 16S rRNA, required for the assembly of 30S particles and may also be responsible for determining the conformation of the 16S rRNA at the A site. This Rickettsia felis (strain ATCC VR-1525 / URRWXCal2) (Rickettsia azadi) protein is Small ribosomal subunit protein uS14.